The chain runs to 1412 residues: MEAVQAAAAATSSGGSSGSVPGSGSGSASKLIKTEPIDFEMLHLEENERQQDIEREPSSSNSNSNSNSLTPQRYTHVQVQTVPPRQPTGLTTPGGTQKVILTPRVEYVQQRATSSTGGGMKHVYSQQQGTAASRSAPPETTALLTTTSGTPQIIITRTLPSNQHLSRRHSASPSALHHYQQQQPQRQQSPPPLHHQQQQQQQHVRVIRDGRLYDEATVVVAARRHSVSPPPLHHHSRSAPVSPVIARRGGAAAYMDQQYQQRQTPPLAPPPPPPPPPPPPPPPQQQQQQYISTGVPPPTAAARKFVVSTSTRHVNVIASNHFQQQQQQHQAQQHQQQHQQHQQHQQHVIASVSSSSSSSAIGSGGSSSSHIFRTPVVSSSSSSNMHHQQQQQQQQSSLGNSVMRPPPPPPPPKVKHASSSSSGNSSSSNTNNSSSSSNGEEPSSSIPDLEFDGTTVLCRVCGDKASGFHYGVHSCEGCKGFFRRSIQQKIQYRPCTKNQQCSILRINRNRCQYCRLKKCIAVGMSRDAVRFGRVPKREKARILAAMQQSTQNRGQQRALATELDDQPRLLAAVLRAHLETCEFTKEKVSAMRQRARDCPSYSMPTLLACPLNPAPELQSEQEFSQRFAHVIRGVIDFAGMIPGFQLLTQDDKFTLLKAGLFDALFVRLICMFDSSINSIICLNGQVMRRDAIQNGANARFLVDSTFNFAERMNSMNLTDAEIGLFCAIVLITPDRPGLRNLELIEKMYSRLKGCLQYIVAQNRPDQPEFLAKLLETMPDLRTLSTLHTEKLVVFRTEHKELLRQQMWSMEDGNNSDGQQNKSPSGSWADAMDVEAAKSPLGSVSSTESADLDYGSPSSSQPQGVSLPSPPQQQPSALASSAPLLAATLSGGCPLRNRANSGSSGDSGAAEMDIVGSHAHLTQNGLTITPIVRHQQQQQQQQQIGILNNAHSRNLNGGHAMCQQQQQHPQLHHHLTAGAARYRKLDSPTDSGIESGNEKNECKAVSSGGSSSCSSPRSSVDDALDCSDAAANHNQVVQHPQLSVVSVSPVRSPQPSTSSHLKRQIVEDMPVLKRVLQAPPLYDTNSLMDEAYKPHKKFRALRHREFETAEADASSSTSGSNSLSAGSPRQSPVPNSVATPPPSAASAAAGNPAQSQLHMHLTRSSPKASMASSHSVLAKSLMAEPRMTPEQMKRSDIIQNYLKRENSTAASSTTNGVGNRSPSSSSTPPPSAVQNQQRWGSSSVITTTCQQRQQSVSPHSNGSSSSSSSSSSSSSSSSSTSSNCSSSSASSCQYFQSPHSTSNGTSAPASSSSGSNSATPLLELQVDIADSAQPLNLSKKSPTPPPSKLHALVAAANAVQRYPTLSADVTVTASNGGPPSAAASPAPSSSPPASVGSPNPGLSAAVHKVMLEA.

Residues 1-14 show a composition bias toward low complexity; that stretch reads MEAVQAAAAATSSG. Disordered stretches follow at residues 1–96, 110–204, 258–298, and 321–448; these read MEAV…PGGT, QRAT…QQHV, QYQQ…VPPP, and HFQQ…SIPD. Positions 15-25 are enriched in gly residues; that stretch reads GSSGSVPGSGS. Over residues 32 to 57 the composition is skewed to basic and acidic residues; that stretch reads IKTEPIDFEMLHLEENERQQDIEREP. Residues 58-68 are compositionally biased toward low complexity; the sequence is SSSNSNSNSNS. Polar residues predominate over residues 69-81; it reads LTPQRYTHVQVQT. Low complexity predominate over residues 87–96; it reads PTGLTTPGGT. Polar residues predominate over residues 124–133; the sequence is YSQQQGTAAS. The span at 135–150 shows a compositional bias: low complexity; sequence SAPPETTALLTTTSGT. Positions 151–164 are enriched in polar residues; it reads PQIIITRTLPSNQH. The span at 177–203 shows a compositional bias: low complexity; sequence HHYQQQQPQRQQSPPPLHHQQQQQQQH. A compositionally biased stretch (pro residues) spans 266-284; that stretch reads PLAPPPPPPPPPPPPPPPQ. Composition is skewed to low complexity over residues 323 to 371, 378 to 403, and 417 to 447; these read QQQQ…SSHI, SSSS…NSVM, and ASSS…SSIP. The segment at residues 455-531 is a DNA-binding region (nuclear receptor); the sequence is TVLCRVCGDK…VGMSRDAVRF (77 aa). 2 NR C4-type zinc fingers span residues 458–478 and 495–514; these read CRVC…CEGC and CTKN…CQYC. The NR LBD domain occupies 565–813; that stretch reads DQPRLLAAVL…QQMWSMEDGN (249 aa). Disordered regions lie at residues 837 to 878, 984 to 1021, 1044 to 1064, 1108 to 1174, 1204 to 1317, and 1368 to 1401; these read KSPL…SALA, LDSP…SVDD, VSVS…KRQI, AEAD…SSHS, ENST…SNSA, and VTVT…NPGL. Low complexity-rich tracts occupy residues 854 to 866, 1005 to 1017, 1044 to 1058, 1110 to 1155, and 1163 to 1174; these read GSPS…GVSL, SSGG…SPRS, VSVS…STSS, ADAS…AQSQ, and SSPKASMASSHS. Composition is skewed to polar residues over residues 1206 to 1219 and 1231 to 1253; these read STAA…VGNR and AVQN…QRQQ. Composition is skewed to low complexity over residues 1254–1290, 1299–1317, and 1372–1400; these read SVSP…SASS, STSN…SNSA, and ASNG…PNPG.

The protein belongs to the nuclear hormone receptor family. NR1 subfamily.

It is found in the nucleus. Implicated in the regulation of ecdysone-triggered gene hierarchies. Probably plays a key role in mediating the regulation of the larval molt by 20-OH-ecdysone. This chain is Ecdysone-induced protein 75B, isoform B (Eip75B), found in Drosophila melanogaster (Fruit fly).